The primary structure comprises 177 residues: Large ribosomal subunit protein uL6 (177 aa).

The protein belongs to the universal ribosomal protein uL6 family. In terms of assembly, part of the 50S ribosomal subunit.

This protein binds to the 23S rRNA, and is important in its secondary structure. It is located near the subunit interface in the base of the L7/L12 stalk, and near the tRNA binding site of the peptidyltransferase center. The polypeptide is Large ribosomal subunit protein uL6 (Pseudomonas fluorescens (strain SBW25)).